The following is a 233-amino-acid chain: Orotidine 5'-phosphate decarboxylase (233 aa).

Substrate-binding positions include D13, K35, 62–71 (DLKFHDIPNT), T122, R182, Q191, G211, and R212. K64 (proton donor) is an active-site residue.

Belongs to the OMP decarboxylase family. Type 1 subfamily. In terms of assembly, homodimer.

It catalyses the reaction orotidine 5'-phosphate + H(+) = UMP + CO2. The protein operates within pyrimidine metabolism; UMP biosynthesis via de novo pathway; UMP from orotate: step 2/2. In terms of biological role, catalyzes the decarboxylation of orotidine 5'-monophosphate (OMP) to uridine 5'-monophosphate (UMP). This chain is Orotidine 5'-phosphate decarboxylase, found in Pseudomonas entomophila (strain L48).